We begin with the raw amino-acid sequence, 226 residues long: MNENLFAPFITPTVLGISVLPLIMIFPCLLFSTSNRWVPNRLIALQLWLVRLITKQMMMMHNKQGRMWTLMLITLIIFIASTNLLGLLPYTFTPTTQLSMNMGMAIPLWMGTVLMGFRNKPKASLAHFLPQGTPTPLIPMLIIIETISLFIQPLALAVRLTANITAGHLLIHLIGSATLALSSISLTVSTITFTILFLLTILEFAVALIQAYVFTLLVSLYLHDNT.

Transmembrane regions (helical) follow at residues 6–26 (FAPF…IMIF), 68–88 (WTLM…LGLL), 97–117 (QLSM…LMGF), 138–158 (IPML…ALAV), 164–184 (ITAG…LSSI), and 193–213 (FTIL…QAYV).

Belongs to the ATPase A chain family. Component of the ATP synthase complex composed at least of ATP5F1A/subunit alpha, ATP5F1B/subunit beta, ATP5MC1/subunit c (homooctomer), MT-ATP6/subunit a, MT-ATP8/subunit 8, ATP5ME/subunit e, ATP5MF/subunit f, ATP5MG/subunit g, ATP5MK/subunit k, ATP5MJ/subunit j, ATP5F1C/subunit gamma, ATP5F1D/subunit delta, ATP5F1E/subunit epsilon, ATP5PF/subunit F6, ATP5PB/subunit b, ATP5PD/subunit d, ATP5PO/subunit OSCP. ATP synthase complex consists of a soluble F(1) head domain (subunits alpha(3) and beta(3)) - the catalytic core - and a membrane F(0) domain - the membrane proton channel (subunits c, a, 8, e, f, g, k and j). These two domains are linked by a central stalk (subunits gamma, delta, and epsilon) rotating inside the F1 region and a stationary peripheral stalk (subunits F6, b, d, and OSCP). Interacts with DNAJC30; interaction is direct.

Its subcellular location is the mitochondrion inner membrane. It carries out the reaction H(+)(in) = H(+)(out). In terms of biological role, subunit a, of the mitochondrial membrane ATP synthase complex (F(1)F(0) ATP synthase or Complex V) that produces ATP from ADP in the presence of a proton gradient across the membrane which is generated by electron transport complexes of the respiratory chain. ATP synthase complex consist of a soluble F(1) head domain - the catalytic core - and a membrane F(1) domain - the membrane proton channel. These two domains are linked by a central stalk rotating inside the F(1) region and a stationary peripheral stalk. During catalysis, ATP synthesis in the catalytic domain of F(1) is coupled via a rotary mechanism of the central stalk subunits to proton translocation. With the subunit c (ATP5MC1), forms the proton-conducting channel in the F(0) domain, that contains two crucial half-channels (inlet and outlet) that facilitate proton movement from the mitochondrial intermembrane space (IMS) into the matrix. Protons are taken up via the inlet half-channel and released through the outlet half-channel, following a Grotthuss mechanism. The sequence is that of ATP synthase F(0) complex subunit a from Ornithorhynchus anatinus (Duckbill platypus).